The chain runs to 460 residues: A-type ATP synthase subunit B 1 (460 aa).

This sequence belongs to the ATPase alpha/beta chains family. In terms of assembly, has multiple subunits with at least A(3), B(3), C, D, E, F, H, I and proteolipid K(x).

It is found in the cell membrane. In terms of biological role, component of the A-type ATP synthase that produces ATP from ADP in the presence of a proton gradient across the membrane. The B chain is a regulatory subunit. The chain is A-type ATP synthase subunit B 1 from Methanospirillum hungatei JF-1 (strain ATCC 27890 / DSM 864 / NBRC 100397 / JF-1).